The primary structure comprises 436 residues: Adenylosuccinate synthetase (436 aa).

GTP-binding positions include 12 to 18 and 40 to 42; these read GDEGKGK and GHT. D13 acts as the Proton acceptor in catalysis. Positions 13 and 40 each coordinate Mg(2+). Residues 13 to 16, 38 to 41, T128, R142, Q223, T238, and R302 contribute to the IMP site; these read DEGK and NAGH. The Proton donor role is filled by H41. 298 to 304 is a substrate binding site; the sequence is TTTGRRR. GTP-binding positions include R304, 330-332, and 412-414; these read KLD and SLG.

It belongs to the adenylosuccinate synthetase family. Homodimer. Mg(2+) serves as cofactor.

It is found in the cytoplasm. The catalysed reaction is IMP + L-aspartate + GTP = N(6)-(1,2-dicarboxyethyl)-AMP + GDP + phosphate + 2 H(+). It participates in purine metabolism; AMP biosynthesis via de novo pathway; AMP from IMP: step 1/2. Its function is as follows. Plays an important role in the de novo pathway of purine nucleotide biosynthesis. Catalyzes the first committed step in the biosynthesis of AMP from IMP. In Prochlorococcus marinus (strain MIT 9301), this protein is Adenylosuccinate synthetase.